The following is a 274-amino-acid chain: Ribosomal RNA small subunit methyltransferase A (274 aa).

S-adenosyl-L-methionine is bound by residues Asn-26, Leu-28, Gly-53, Glu-74, Asp-94, and Asn-114.

It belongs to the class I-like SAM-binding methyltransferase superfamily. rRNA adenine N(6)-methyltransferase family. RsmA subfamily.

The protein localises to the cytoplasm. The catalysed reaction is adenosine(1518)/adenosine(1519) in 16S rRNA + 4 S-adenosyl-L-methionine = N(6)-dimethyladenosine(1518)/N(6)-dimethyladenosine(1519) in 16S rRNA + 4 S-adenosyl-L-homocysteine + 4 H(+). Specifically dimethylates two adjacent adenosines (A1518 and A1519) in the loop of a conserved hairpin near the 3'-end of 16S rRNA in the 30S particle. May play a critical role in biogenesis of 30S subunits. The polypeptide is Ribosomal RNA small subunit methyltransferase A (Bdellovibrio bacteriovorus (strain ATCC 15356 / DSM 50701 / NCIMB 9529 / HD100)).